The primary structure comprises 301 residues: GTPase Era (301 aa).

The 169-residue stretch at 7–175 (YCGFIAIVGR…AAIVRKHLPE (169 aa)) folds into the Era-type G domain. Residues 15–22 (GRPNVGKS) are G1. 15–22 (GRPNVGKS) is a binding site for GTP. The tract at residues 41-45 (QTTRH) is G2. A G3 region spans residues 62–65 (DTPG). Residues 62–66 (DTPGL) and 124–127 (NKVD) each bind GTP. The tract at residues 124–127 (NKVD) is G4. The G5 stretch occupies residues 154–156 (ISA). In terms of domain architecture, KH type-2 spans 206–283 (LGAELPYSVT…HLELWVKVKS (78 aa)).

This sequence belongs to the TRAFAC class TrmE-Era-EngA-EngB-Septin-like GTPase superfamily. Era GTPase family. In terms of assembly, monomer.

The protein localises to the cytoplasm. It is found in the cell inner membrane. In terms of biological role, an essential GTPase that binds both GDP and GTP, with rapid nucleotide exchange. Plays a role in 16S rRNA processing and 30S ribosomal subunit biogenesis and possibly also in cell cycle regulation and energy metabolism. In Escherichia coli O1:K1 / APEC, this protein is GTPase Era.